Here is a 333-residue protein sequence, read N- to C-terminus: SPbeta prophage-derived recombinase-like protein YomM (333 aa).

Positions 30–113 (EEHRNLVQEF…GVSSLNNYIE (84 aa)) constitute a Core-binding (CB) domain. Positions 142–332 (YEKVKVTYDD…DFEEEKNQIF (191 aa)) constitute a Tyr recombinase domain. Active-site residues include arginine 180, lysine 211, histidine 281, and histidine 308. The active-site O-(3'-phospho-DNA)-tyrosine intermediate is the tyrosine 319.

The protein belongs to the 'phage' integrase family.

The sequence is that of SPbeta prophage-derived recombinase-like protein YomM (yomM) from Bacillus subtilis (strain 168).